The following is a 233-amino-acid chain: Ciliary microtubule inner protein 6 (233 aa).

Composition is skewed to basic and acidic residues over residues 1–14 and 21–33; these read MEGE…KTED and AERK…EKSP. The tract at residues 1 to 45 is disordered; the sequence is MEGEEKQQQHKTEDDGIACVAERKVEIKNEKSPGKSTQHPKPCVD. Residues 127–159 form a mn region; the sequence is GIVPLTSLDVSGEHENNFVEYISFIHQYDARRT. The disordered stretch occupies residues 192–233; that stretch reads LLNTLESGSSEQPQKTDKGNSSGDKVTSPGLCQQNSQELLET. The segment covering 195–233 has biased composition (polar residues); the sequence is TLESGSSEQPQKTDKGNSSGDKVTSPGLCQQNSQELLET.

The protein localises to the cell projection. It localises to the cilium. This chain is Ciliary microtubule inner protein 6 (Cimip6), found in Mus musculus (Mouse).